A 282-amino-acid chain; its full sequence is Phosphate import ATP-binding protein PstB (282 aa).

Basic and acidic residues predominate over residues 1 to 10 (MNMAESHLDP). Positions 1–24 (MNMAESHLDPSKLATGPAGAGAAT) are disordered. Low complexity predominate over residues 14 to 24 (ATGPAGAGAAT). The ABC transporter domain occupies 36–277 (IEVKNLNFFY…PARKETEDYI (242 aa)). 68–75 (GPSGCGKS) serves as a coordination point for ATP.

It belongs to the ABC transporter superfamily. Phosphate importer (TC 3.A.1.7) family. The complex is composed of two ATP-binding proteins (PstB), two transmembrane proteins (PstC and PstA) and a solute-binding protein (PstS).

The protein resides in the cell inner membrane. It carries out the reaction phosphate(out) + ATP + H2O = ADP + 2 phosphate(in) + H(+). Functionally, part of the ABC transporter complex PstSACB involved in phosphate import. Responsible for energy coupling to the transport system. The protein is Phosphate import ATP-binding protein PstB of Burkholderia thailandensis (strain ATCC 700388 / DSM 13276 / CCUG 48851 / CIP 106301 / E264).